The following is a 224-amino-acid chain: Endonuclease NucS (224 aa).

The protein belongs to the NucS endonuclease family.

It localises to the cytoplasm. Functionally, cleaves both 3' and 5' ssDNA extremities of branched DNA structures. This is Endonuclease NucS from Mycolicibacterium smegmatis (strain ATCC 700084 / mc(2)155) (Mycobacterium smegmatis).